The chain runs to 86 residues: ATP synthase subunit c (86 aa).

Transmembrane regions (helical) follow at residues 8-28 (VLAASAIGAGLAMIAGIGAGI) and 66-86 (GIYALVIALLLLFANPLIGML).

It belongs to the ATPase C chain family. As to quaternary structure, F-type ATPases have 2 components, F(1) - the catalytic core - and F(0) - the membrane proton channel. F(1) has five subunits: alpha(3), beta(3), gamma(1), delta(1), epsilon(1). F(0) has three main subunits: a(1), b(2) and c(10-14). The alpha and beta chains form an alternating ring which encloses part of the gamma chain. F(1) is attached to F(0) by a central stalk formed by the gamma and epsilon chains, while a peripheral stalk is formed by the delta and b chains.

It localises to the cell membrane. In terms of biological role, f(1)F(0) ATP synthase produces ATP from ADP in the presence of a proton or sodium gradient. F-type ATPases consist of two structural domains, F(1) containing the extramembraneous catalytic core and F(0) containing the membrane proton channel, linked together by a central stalk and a peripheral stalk. During catalysis, ATP synthesis in the catalytic domain of F(1) is coupled via a rotary mechanism of the central stalk subunits to proton translocation. Key component of the F(0) channel; it plays a direct role in translocation across the membrane. A homomeric c-ring of between 10-14 subunits forms the central stalk rotor element with the F(1) delta and epsilon subunits. The polypeptide is ATP synthase subunit c (Natranaerobius thermophilus (strain ATCC BAA-1301 / DSM 18059 / JW/NM-WN-LF)).